A 265-amino-acid polypeptide reads, in one-letter code: Mlc titration factor A (265 aa).

Zn(2+)-binding residues include His111, His148, His152, and Glu211.

It belongs to the MtfA family. Interacts with Mlc. Zn(2+) is required as a cofactor.

The protein resides in the cytoplasm. Involved in the modulation of the activity of the glucose-phosphotransferase system (glucose-PTS). Interacts with the transcriptional repressor Mlc, preventing its interaction with DNA and leading to the modulation of expression of genes regulated by Mlc, including ptsG, which encodes the PTS system glucose-specific EIICB component. In terms of biological role, shows zinc-dependent metallopeptidase activity. In Salmonella agona (strain SL483), this protein is Mlc titration factor A.